The primary structure comprises 235 residues: Small ribosomal subunit protein uS10m (235 aa).

Residues 1–19 constitute a mitochondrion transit peptide; the sequence is MLRTSVRSPLLYRCLSKRF.

Belongs to the universal ribosomal protein uS10 family. Part of the mitochondrial small ribosomal subunit.

The protein resides in the mitochondrion. Functionally, involved in mitochondrial genome encoded proteins translation. Involved in the binding of tRNA to the ribosomes. The sequence is that of Small ribosomal subunit protein uS10m (RSM10) from Candida glabrata (strain ATCC 2001 / BCRC 20586 / JCM 3761 / NBRC 0622 / NRRL Y-65 / CBS 138) (Yeast).